An 849-amino-acid chain; its full sequence is Probable receptor-like protein kinase At1g30570 (849 aa).

Positions 1–28 (MSKLRKKYLEHLLCVLIFFTYVIGYGEA) are cleaved as a signal peptide. Topologically, residues 29–429 (QSKSFLVDCG…GHSVSDSKMR (401 aa)) are extracellular. N-linked (GlcNAc...) asparagine glycans are attached at residues Asn40, Asn57, Asn94, Asn122, Asn158, Asn268, Asn271, Asn305, and Asn343. Residues 430–450 (IIWISVGAGIAIIIFFVFLGI) traverse the membrane as a helical segment. Topologically, residues 451–849 (LVVCLCKKRR…QTGSALHNSA (399 aa)) are cytoplasmic. The Protein kinase domain maps to 520–793 (FDDGLAIGVG…GEVLWSLEYV (274 aa)). Residues 526–534 (IGVGGFGKV) and Lys548 contribute to the ATP site. The active-site Proton acceptor is Asp644. The interval 810-849 (FSSSQAVEEAPESFTLPACSNQDSSETEQSQTGSALHNSA) is disordered. Residues 827–849 (ACSNQDSSETEQSQTGSALHNSA) are compositionally biased toward polar residues.

It belongs to the protein kinase superfamily. Ser/Thr protein kinase family.

Its subcellular location is the cell membrane. This Arabidopsis thaliana (Mouse-ear cress) protein is Probable receptor-like protein kinase At1g30570.